Consider the following 445-residue polypeptide: Zinc finger protein 296 (445 aa).

Basic residues predominate over residues 1–10 (MSRRKAGRVP). The segment at 1-20 (MSRRKAGRVPRRVDPDTDTD) is disordered. A Glycyl lysine isopeptide (Lys-Gly) (interchain with G-Cter in SUMO2) cross-link involves residue Lys-31. Positions 62 to 88 (SRPLGAPSTCAPRMPLSSKSSDRQPWT) are disordered. C2H2-type zinc fingers lie at residues 138–161 (LSCL…QWDH), 212–234 (PTCD…MRSH), and 240–262 (YSCD…KKTH). The segment at 256-359 (NRHKKTHRQL…TAPRKSHGPG (104 aa)) is disordered. Positions 269-278 (SPSTSASSRG) are enriched in polar residues. Gly residues predominate over residues 320 to 332 (PGSGAQGGPGFVG). A compositionally biased stretch (basic and acidic residues) spans 338–351 (KVERTDPVKIEKTA). C2H2-type zinc fingers lie at residues 360–382 (GKCE…RRSH), 388–410 (YTCD…RRTH), and 418–441 (VKCP…RQKH).

It belongs to the krueppel C2H2-type zinc-finger protein family. As to quaternary structure, interacts with KLF4. As to expression, strongly expressed in testis and embryonic stem cells.

It is found in the nucleus. In terms of biological role, may be a transcriptional corepressor with KLF4. In Mus musculus (Mouse), this protein is Zinc finger protein 296.